Reading from the N-terminus, the 117-residue chain is MSKKVLTAYNAIDHTYFSQLSQRNKALYMYRSILRLANKWESDSQREDIRYETRSTFQKNKDLTDTEIINDKIEEARSRMLTALHYNIPYEKKKYNIPKYQIQMKPPPDPKDESGIC.

It belongs to the complex I LYR family.

The chain is LYR motif-containing protein 1 (lyrm1) from Dictyostelium discoideum (Social amoeba).